A 211-amino-acid polypeptide reads, in one-letter code: Pyridoxine/pyridoxamine 5'-phosphate oxidase (211 aa).

Substrate contacts are provided by residues R7–Y10 and K65. FMN-binding positions include R60–K65, Y75–T76, R81, K82, and Q104. Positions 122, 126, and 130 each coordinate substrate. Residues Q139–S140 and W184 contribute to the FMN site. R190–H192 contributes to the substrate binding site. Residue R194 coordinates FMN.

It belongs to the pyridoxamine 5'-phosphate oxidase family. As to quaternary structure, homodimer. The cofactor is FMN.

It catalyses the reaction pyridoxamine 5'-phosphate + O2 + H2O = pyridoxal 5'-phosphate + H2O2 + NH4(+). The catalysed reaction is pyridoxine 5'-phosphate + O2 = pyridoxal 5'-phosphate + H2O2. It functions in the pathway cofactor metabolism; pyridoxal 5'-phosphate salvage; pyridoxal 5'-phosphate from pyridoxamine 5'-phosphate: step 1/1. Its pathway is cofactor metabolism; pyridoxal 5'-phosphate salvage; pyridoxal 5'-phosphate from pyridoxine 5'-phosphate: step 1/1. Its function is as follows. Catalyzes the oxidation of either pyridoxine 5'-phosphate (PNP) or pyridoxamine 5'-phosphate (PMP) into pyridoxal 5'-phosphate (PLP). This is Pyridoxine/pyridoxamine 5'-phosphate oxidase from Vibrio vulnificus (strain CMCP6).